Here is a 338-residue protein sequence, read N- to C-terminus: Glycerol-3-phosphate dehydrogenase [NAD(P)+] (338 aa).

S13, W14, and K108 together coordinate NADPH. The sn-glycerol 3-phosphate site is built by K108, G139, and S141. A143 provides a ligand contact to NADPH. Sn-glycerol 3-phosphate is bound by residues K194, D247, S257, R258, and N259. K194 functions as the Proton acceptor in the catalytic mechanism. R258 provides a ligand contact to NADPH. 2 residues coordinate NADPH: V282 and E284.

Belongs to the NAD-dependent glycerol-3-phosphate dehydrogenase family.

Its subcellular location is the cytoplasm. The enzyme catalyses sn-glycerol 3-phosphate + NAD(+) = dihydroxyacetone phosphate + NADH + H(+). It carries out the reaction sn-glycerol 3-phosphate + NADP(+) = dihydroxyacetone phosphate + NADPH + H(+). Its pathway is membrane lipid metabolism; glycerophospholipid metabolism. Catalyzes the reduction of the glycolytic intermediate dihydroxyacetone phosphate (DHAP) to sn-glycerol 3-phosphate (G3P), the key precursor for phospholipid synthesis. The polypeptide is Glycerol-3-phosphate dehydrogenase [NAD(P)+] (Streptococcus pneumoniae serotype 19F (strain G54)).